We begin with the raw amino-acid sequence, 393 residues long: tRNA(Met) cytidine acetate ligase (393 aa).

Residues Gly-81, Asn-142, and Arg-167 each coordinate ATP.

This sequence belongs to the TmcAL family.

The protein resides in the cytoplasm. It catalyses the reaction cytidine(34) in elongator tRNA(Met) + acetate + ATP = N(4)-acetylcytidine(34) in elongator tRNA(Met) + AMP + diphosphate. Functionally, catalyzes the formation of N(4)-acetylcytidine (ac(4)C) at the wobble position of elongator tRNA(Met), using acetate and ATP as substrates. First activates an acetate ion to form acetyladenylate (Ac-AMP) and then transfers the acetyl group to tRNA to form ac(4)C34. This chain is tRNA(Met) cytidine acetate ligase, found in Bacillus cereus (strain ATCC 14579 / DSM 31 / CCUG 7414 / JCM 2152 / NBRC 15305 / NCIMB 9373 / NCTC 2599 / NRRL B-3711).